We begin with the raw amino-acid sequence, 461 residues long: Cysteine--tRNA ligase (461 aa).

Cys-29 serves as a coordination point for Zn(2+). Positions 31 to 41 match the 'HIGH' region motif; it reads MTVYDFCHIGH. Residues Cys-210, His-235, and Glu-239 each coordinate Zn(2+). The 'KMSKS' region signature appears at 267 to 271; sequence KMSKS. Lys-270 contacts ATP.

It belongs to the class-I aminoacyl-tRNA synthetase family. In terms of assembly, monomer. The cofactor is Zn(2+).

It localises to the cytoplasm. The catalysed reaction is tRNA(Cys) + L-cysteine + ATP = L-cysteinyl-tRNA(Cys) + AMP + diphosphate. This Stutzerimonas stutzeri (strain A1501) (Pseudomonas stutzeri) protein is Cysteine--tRNA ligase.